A 549-amino-acid chain; its full sequence is Oxygen-dependent choline dehydrogenase (549 aa).

FAD is bound at residue 4-33 (DFVIIGSGSAGSAMAYRLSEDGRYSVIVIE). His465 acts as the Proton acceptor in catalysis.

Belongs to the GMC oxidoreductase family. FAD is required as a cofactor.

It carries out the reaction choline + A = betaine aldehyde + AH2. It catalyses the reaction betaine aldehyde + NAD(+) + H2O = glycine betaine + NADH + 2 H(+). It participates in amine and polyamine biosynthesis; betaine biosynthesis via choline pathway; betaine aldehyde from choline (cytochrome c reductase route): step 1/1. Involved in the biosynthesis of the osmoprotectant glycine betaine. Catalyzes the oxidation of choline to betaine aldehyde and betaine aldehyde to glycine betaine at the same rate. This Brucella anthropi (strain ATCC 49188 / DSM 6882 / CCUG 24695 / JCM 21032 / LMG 3331 / NBRC 15819 / NCTC 12168 / Alc 37) (Ochrobactrum anthropi) protein is Oxygen-dependent choline dehydrogenase.